Reading from the N-terminus, the 352-residue chain is Chorismate synthase (352 aa).

R48 lines the NADP(+) pocket. Residues 125-127 (RSS), 237-238 (NA), G278, 293-297 (KPTSS), and R319 each bind FMN.

This sequence belongs to the chorismate synthase family. As to quaternary structure, homotetramer. FMNH2 serves as cofactor.

The catalysed reaction is 5-O-(1-carboxyvinyl)-3-phosphoshikimate = chorismate + phosphate. It participates in metabolic intermediate biosynthesis; chorismate biosynthesis; chorismate from D-erythrose 4-phosphate and phosphoenolpyruvate: step 7/7. Its function is as follows. Catalyzes the anti-1,4-elimination of the C-3 phosphate and the C-6 proR hydrogen from 5-enolpyruvylshikimate-3-phosphate (EPSP) to yield chorismate, which is the branch point compound that serves as the starting substrate for the three terminal pathways of aromatic amino acid biosynthesis. This reaction introduces a second double bond into the aromatic ring system. The chain is Chorismate synthase from Francisella tularensis subsp. tularensis (strain FSC 198).